The primary structure comprises 289 residues: NAD(P)H-hydrate epimerase (289 aa).

The YjeF N-terminal domain occupies 71 to 277 (AQTIDNELMS…SIVEKYNLKV (207 aa)). 122-126 (NNGGD) lines the (6S)-NADPHX pocket. K(+) contacts are provided by Asn123 and Asp185. (6S)-NADPHX is bound by residues 189–195 (GFSFTGE) and Asp218. Ser221 contacts K(+).

Belongs to the NnrE/AIBP family. It depends on K(+) as a cofactor.

It carries out the reaction (6R)-NADHX = (6S)-NADHX. The enzyme catalyses (6R)-NADPHX = (6S)-NADPHX. In terms of biological role, catalyzes the epimerization of the S- and R-forms of NAD(P)HX, a damaged form of NAD(P)H that is a result of enzymatic or heat-dependent hydration. This is a prerequisite for the S-specific NAD(P)H-hydrate dehydratase to allow the repair of both epimers of NAD(P)HX. This is NAD(P)H-hydrate epimerase from Plasmodium vivax (strain Salvador I).